A 219-amino-acid polypeptide reads, in one-letter code: MERKGLAARSSGNPSPPALGEGPRPVPPPCVPSGGGAPERGQAGTAAEPAELIRRAHEFKSQGAQCYKDKKFREAIGKYHRALLELKGLLPSQEERDARPASSAGVPKSSRLSEEQSKTVEAIEIDCYNSLAACLLQAELVNYERVKEYCLKVLKKEGENFKALYRSGVAFYHLGDYDKALYYLKEARTRQPTDTNVIRYIQLTEMKLSRCSQREKEAM.

The interval 1–49 (MERKGLAARSSGNPSPPALGEGPRPVPPPCVPSGGGAPERGQAGTAAEP) is disordered. The TPR 1 repeat unit spans residues 56 to 89 (AHEFKSQGAQCYKDKKFREAIGKYHRALLELKGL). A disordered region spans residues 94 to 115 (EERDARPASSAGVPKSSRLSEE). Ser-102 is modified (phosphoserine). 2 TPR repeats span residues 125–160 (IDCY…EGEN) and 161–194 (FKAL…QPTD).

It belongs to the TTC9 family.

This is Tetratricopeptide repeat protein 9A (Ttc9) from Mus musculus (Mouse).